Consider the following 541-residue polypeptide: Chaperonin GroEL 2 (541 aa).

Residues 29–32, 86–90, G413, 476–478, and D492 contribute to the ATP site; these read TLGP, DGTTT, and NAA.

Belongs to the chaperonin (HSP60) family. As to quaternary structure, forms a cylinder of 14 subunits composed of two heptameric rings stacked back-to-back. Interacts with the co-chaperonin GroES.

The protein resides in the secreted. It localises to the capsule. Its subcellular location is the cell surface. It is found in the cell wall. The enzyme catalyses ATP + H2O + a folded polypeptide = ADP + phosphate + an unfolded polypeptide.. Together with its co-chaperonin GroES, plays an essential role in assisting protein folding. The GroEL-GroES system forms a nano-cage that allows encapsulation of the non-native substrate proteins and provides a physical environment optimized to promote and accelerate protein folding. The polypeptide is Chaperonin GroEL 2 (Mycobacterium ulcerans (strain Agy99)).